We begin with the raw amino-acid sequence, 410 residues long: NIPA-like protein 3 (410 aa).

The segment at 1–24 (MDGAHSAGLQLQPLPPTSGATSTS) is disordered. Helical transmembrane passes span 37–57 (NLIG…ALNL), 80–100 (WWLG…SYAF), 105–125 (LIVP…IIFI), 139–159 (VLSF…VTFA), 175–195 (LVSW…CLLL), 206–226 (IVVI…TVKA), 244–264 (PIFY…ATFL), 275–295 (LIAS…GAIF), and 304–324 (ALHI…VFLI). Position 376 is a phosphoserine (Ser-376). A disordered region spans residues 389–410 (EEHSSRSTPGVPYRVLEHTKKE).

This sequence belongs to the NIPA family.

The protein resides in the membrane. This chain is NIPA-like protein 3 (Nipal3), found in Mus musculus (Mouse).